A 392-amino-acid polypeptide reads, in one-letter code: DNA replication and repair protein RecF (392 aa).

33-40 (GANGAGKT) provides a ligand contact to ATP.

Belongs to the RecF family.

Its subcellular location is the cytoplasm. Its function is as follows. The RecF protein is involved in DNA metabolism; it is required for DNA replication and normal SOS inducibility. RecF binds preferentially to single-stranded, linear DNA. It also seems to bind ATP. In Caulobacter sp. (strain K31), this protein is DNA replication and repair protein RecF.